A 304-amino-acid polypeptide reads, in one-letter code: Nicotinamide/nicotinic acid mononucleotide adenylyltransferase 2 (304 aa).

2 residues coordinate NAD(+): serine 16 and phenylalanine 17. Residue histidine 24 coordinates ATP. NAD(+)-binding residues include tryptophan 92 and threonine 95. S-palmitoyl cysteine attachment occurs at residues cysteine 161 and cysteine 162. 5 residues coordinate NAD(+): glycine 197, aspartate 199, leucine 209, tryptophan 210, and arginine 229. Residue threonine 268 to arginine 271 participates in ATP binding.

Belongs to the eukaryotic NMN adenylyltransferase family. In terms of assembly, monomer. The cofactor is Mg(2+).

The protein resides in the golgi apparatus membrane. The protein localises to the cytoplasmic vesicle membrane. It is found in the cytoplasm. It localises to the cell projection. Its subcellular location is the axon. The catalysed reaction is beta-nicotinamide D-ribonucleotide + ATP + H(+) = diphosphate + NAD(+). The enzyme catalyses nicotinate beta-D-ribonucleotide + ATP + H(+) = deamido-NAD(+) + diphosphate. It functions in the pathway cofactor biosynthesis; NAD(+) biosynthesis; NAD(+) from nicotinamide D-ribonucleotide: step 1/1. Its pathway is cofactor biosynthesis; NAD(+) biosynthesis; deamido-NAD(+) from nicotinate D-ribonucleotide: step 1/1. In terms of biological role, nicotinamide/nicotinate-nucleotide adenylyltransferase that acts as an axon maintenance factor. Axon survival factor required for the maintenance of healthy axons: acts by delaying Wallerian axon degeneration, an evolutionarily conserved process that drives the loss of damaged axons. Catalyzes the formation of NAD(+) from nicotinamide mononucleotide (NMN) and ATP. Can also use the deamidated form; nicotinic acid mononucleotide (NaMN) as substrate but with a lower efficiency. Also catalyzes the reverse reaction, i.e. the pyrophosphorolytic cleavage of NAD(+). For the pyrophosphorolytic activity prefers NAD(+), NADH and NaAD as substrates and degrades nicotinic acid adenine dinucleotide phosphate (NHD) less effectively. Also acts as an activator of ADP-ribosylation by supporting the catalytic activity of PARP16 and promoting mono-ADP-ribosylation of ribosomes by PARP16. May be involved in the maintenance of axonal integrity. The polypeptide is Nicotinamide/nicotinic acid mononucleotide adenylyltransferase 2 (nmnat2) (Danio rerio (Zebrafish)).